The chain runs to 880 residues: Valine--tRNA ligase (880 aa).

The short motif at 48 to 58 is the 'HIGH' region element; that stretch reads PNVTGKLHLGH. The 'KMSKS' region motif lies at 524-528; that stretch reads KMSKS. K527 provides a ligand contact to ATP. Residues 808 to 879 are a coiled coil; it reads LAGLINIEEE…VKERIAQLRS (72 aa).

Belongs to the class-I aminoacyl-tRNA synthetase family. ValS type 1 subfamily. Monomer.

The protein resides in the cytoplasm. It carries out the reaction tRNA(Val) + L-valine + ATP = L-valyl-tRNA(Val) + AMP + diphosphate. In terms of biological role, catalyzes the attachment of valine to tRNA(Val). As ValRS can inadvertently accommodate and process structurally similar amino acids such as threonine, to avoid such errors, it has a 'posttransfer' editing activity that hydrolyzes mischarged Thr-tRNA(Val) in a tRNA-dependent manner. This Enterococcus faecalis (strain ATCC 700802 / V583) protein is Valine--tRNA ligase.